Here is a 418-residue protein sequence, read N- to C-terminus: Serine hydroxymethyltransferase (418 aa).

Residues leucine 121 and 125-127 (GHL) contribute to the (6S)-5,6,7,8-tetrahydrofolate site. At lysine 230 the chain carries N6-(pyridoxal phosphate)lysine. Residues glutamate 246 and 355–357 (SPF) contribute to the (6S)-5,6,7,8-tetrahydrofolate site.

It belongs to the SHMT family. Homodimer. Pyridoxal 5'-phosphate is required as a cofactor.

It localises to the cytoplasm. The enzyme catalyses (6R)-5,10-methylene-5,6,7,8-tetrahydrofolate + glycine + H2O = (6S)-5,6,7,8-tetrahydrofolate + L-serine. It functions in the pathway one-carbon metabolism; tetrahydrofolate interconversion. Its pathway is amino-acid biosynthesis; glycine biosynthesis; glycine from L-serine: step 1/1. In terms of biological role, catalyzes the reversible interconversion of serine and glycine with tetrahydrofolate (THF) serving as the one-carbon carrier. This reaction serves as the major source of one-carbon groups required for the biosynthesis of purines, thymidylate, methionine, and other important biomolecules. Also exhibits THF-independent aldolase activity toward beta-hydroxyamino acids, producing glycine and aldehydes, via a retro-aldol mechanism. The polypeptide is Serine hydroxymethyltransferase (Streptococcus pneumoniae (strain Taiwan19F-14)).